Reading from the N-terminus, the 71-residue chain is Large ribosomal subunit protein bL31 (71 aa).

Zn(2+) contacts are provided by Cys16, Cys18, Cys38, and Cys41.

The protein belongs to the bacterial ribosomal protein bL31 family. Type A subfamily. As to quaternary structure, part of the 50S ribosomal subunit. Zn(2+) is required as a cofactor.

In terms of biological role, binds the 23S rRNA. This chain is Large ribosomal subunit protein bL31, found in Neisseria gonorrhoeae (strain ATCC 700825 / FA 1090).